Here is a 1403-residue protein sequence, read N- to C-terminus: DNA-directed RNA polymerase subunit beta' (1403 aa).

4 residues coordinate Zn(2+): cysteine 71, cysteine 73, cysteine 86, and cysteine 89. Residues aspartate 462, aspartate 464, and aspartate 466 each coordinate Mg(2+). Zn(2+) contacts are provided by cysteine 811, cysteine 885, cysteine 892, and cysteine 895.

Belongs to the RNA polymerase beta' chain family. The RNAP catalytic core consists of 2 alpha, 1 beta, 1 beta' and 1 omega subunit. When a sigma factor is associated with the core the holoenzyme is formed, which can initiate transcription. Mg(2+) serves as cofactor. Requires Zn(2+) as cofactor.

It catalyses the reaction RNA(n) + a ribonucleoside 5'-triphosphate = RNA(n+1) + diphosphate. In terms of biological role, DNA-dependent RNA polymerase catalyzes the transcription of DNA into RNA using the four ribonucleoside triphosphates as substrates. The chain is DNA-directed RNA polymerase subunit beta' from Bartonella tribocorum (strain CIP 105476 / IBS 506).